Here is a 176-residue protein sequence, read N- to C-terminus: MLIPPINLHAWIEEHRHLLKPPVGNKCIQQDGFIIMVVGGPNARTDYHYDEGPEWFFQLEGEMVLKVQDEGVARDIPIRAGEVFLLPPKVPHSPQRAAGSIGLVIERERLPNEQDGLQWYCPQCNHKLYEAMFPLKNIETDFPPVFDRFYRSLALRTCSQCGHLHPAPERYATVED.

O2 is bound at residue Arg-44. Residues His-48, Glu-54, and His-92 each contribute to the Fe cation site. Glu-54 contributes to the substrate binding site. Residues Arg-96 and Glu-106 each coordinate substrate. Fe cation-binding residues include Cys-121, Cys-124, Cys-158, and Cys-161.

This sequence belongs to the 3-HAO family. Homodimer. Fe(2+) is required as a cofactor.

The enzyme catalyses 3-hydroxyanthranilate + O2 = (2Z,4Z)-2-amino-3-carboxymuconate 6-semialdehyde. The protein operates within cofactor biosynthesis; NAD(+) biosynthesis; quinolinate from L-kynurenine: step 3/3. Functionally, catalyzes the oxidative ring opening of 3-hydroxyanthranilate to 2-amino-3-carboxymuconate semialdehyde, which spontaneously cyclizes to quinolinate. The chain is 3-hydroxyanthranilate 3,4-dioxygenase from Xanthomonas euvesicatoria pv. vesicatoria (strain 85-10) (Xanthomonas campestris pv. vesicatoria).